The chain runs to 321 residues: MIKLLYPQFWQERNIIAYLLLPISLIYQFLSYLRTSLACPVILPAKVICVGNCSVGGTGKTQIVIYLAKLLKAKNVSFVIITKAYGSNIKSTTIIQKWHTALEVGDEGIMLAKYGTAIAAKHIKDILPLINELKPDVIIVDDFLQNPYLHKDFTIVSVDSQRLFGNRFLIPAGPLRQNPKQVLDAADLIFLVSSNQDQIPNELTPYIDKVINAQIVPSNNIDKTKNYFAFSGIGNPQRFFLTLENYRLNIVGHKTFPDHYNYLQADLENLYSLAKEHNAILITTRKDYVKFNYLNNKIICLDVELSINNPDLLNEKIFKKA.

54-61 (SVGGTGKT) contributes to the ATP binding site.

It belongs to the LpxK family.

It catalyses the reaction a lipid A disaccharide + ATP = a lipid IVA + ADP + H(+). It participates in glycolipid biosynthesis; lipid IV(A) biosynthesis; lipid IV(A) from (3R)-3-hydroxytetradecanoyl-[acyl-carrier-protein] and UDP-N-acetyl-alpha-D-glucosamine: step 6/6. Its function is as follows. Transfers the gamma-phosphate of ATP to the 4'-position of a tetraacyldisaccharide 1-phosphate intermediate (termed DS-1-P) to form tetraacyldisaccharide 1,4'-bis-phosphate (lipid IVA). In Rickettsia typhi (strain ATCC VR-144 / Wilmington), this protein is Tetraacyldisaccharide 4'-kinase.